A 556-amino-acid chain; its full sequence is HIRA-interacting protein 3 (556 aa).

S27 carries the post-translational modification Phosphoserine. Positions 64–77 are enriched in basic and acidic residues; the sequence is DEAASREDKLDLTK. The interval 64–426 is disordered; the sequence is DEAASREDKL…GRRGEDHPAV (363 aa). At T84 the chain carries Phosphothreonine. Phosphoserine is present on residues S87, S98, S100, S125, S142, S143, S159, and S160. Over residues 99–108 the composition is skewed to low complexity; that stretch reads ESESGSEASS. Residues 126–158 show a composition bias toward basic and acidic residues; sequence PAKEENPRRASKAVEESSDEERQRDLPAQRGEE. Basic residues predominate over residues 168-177; the sequence is KGKTRKKPVV. Phosphoserine occurs at positions 196, 199, 223, and 227. Residues 209–224 are compositionally biased toward basic and acidic residues; the sequence is KKVEGNKGTKSLKESE. Over residues 240 to 254 the composition is skewed to acidic residues; sequence EEEVEEEEKEEDEEK. Basic residues predominate over residues 260–269; it reads RTRSNGRRKS. S289 and S291 each carry phosphoserine. The span at 304–322 shows a compositional bias: basic and acidic residues; sequence DSGRDREPPVQRKSEDRTQ. A phosphoserine mark is found at S330, S332, S333, and S357. Residue T358 is modified to Phosphothreonine. S359, S363, S370, and S372 each carry phosphoserine. Residues 385–396 are compositionally biased toward basic residues; that stretch reads RSSKKSSRKGRT. Residues 403–527 are interaction with the histone H2A-H2B complex; that stretch reads SDGSPEAKGG…APPGELYRRT (125 aa). T471 is modified (phosphothreonine). Residues 502–556 are disordered; the sequence is SGRPRRRTAWNPLGEAAPPGELYRRTLDSDEERPRPAPPDWSHMRGIISSDGESN. The segment covering 523–536 has biased composition (basic and acidic residues); it reads LYRRTLDSDEERPR. S530, S550, S551, and S555 each carry phosphoserine.

As to quaternary structure, interacts (via C-terminus) with histone H2A-H2B dimers; the interaction is direct. Interacts with HIRA. Interacts with CK2. Post-translationally, phosphorylated by CK2. As to expression, widely expressed. Isoform 1 is predominant in skeletal muscle. Isoform 2 is predominant in liver and heart.

The protein localises to the nucleus. Functionally, histone chaperone that carries a H2A-H2B histone complex and facilitates its deposition onto chromatin. The protein is HIRA-interacting protein 3 (HIRIP3) of Homo sapiens (Human).